The following is a 588-amino-acid chain: Nucleoporin ndc-1 (588 aa).

Polar residues predominate over residues 1 to 12 (MMGDSHSSFTTT). The segment at 1–55 (MMGDSHSSFTTTTDEHLYNQFSPGRRKNDFPAASSSSSSPNLRRSPNRTVSSPRV) is disordered. Over 1-79 (MMGDSHSSFT…FQAEISVRKR (79 aa)) the chain is Cytoplasmic. Positions 31-48 (PAASSSSSSPNLRRSPNR) are enriched in low complexity. A helical transmembrane segment spans residues 80-100 (LAGAACGYLSTIFFIVTVSIL). At 101–122 (KLTIWAPFSSVQDSLAWWIYPN) the chain is on the perinuclear space side. A helical transmembrane segment spans residues 123–143 (AWASIIFVGIASVAMSLFSII). The Cytoplasmic portion of the chain corresponds to 144–159 (KFCKVDQLPRLAATDT). The chain crosses the membrane as a helical span at residues 160–180 (FALAGVALEFVTRLTFVYTAF). Residues 181 to 190 (CVADFSFSRE) lie on the Perinuclear space side of the membrane. Residues 191-211 (FAFVAISLAIAISSALVVFRS) traverse the membrane as a helical segment. The Cytoplasmic portion of the chain corresponds to 212 to 255 (DYQLNFSHIQVNSVKTLIDFGTSLPYANISEICGIDAAISYTAA). A helical transmembrane segment spans residues 256–276 (VALILVVGPMVSGFSAWWLLL). Position 277 (N277) is a topological domain, perinuclear space. A helical membrane pass occupies residues 278–298 (IPFHVVLFGLCFTQQFYSKIS). The Cytoplasmic segment spans residues 299-588 (MKIVNQIVMK…IRMICLTDEL (290 aa)).

The protein belongs to the NDC1 family.

Its subcellular location is the nucleus. The protein resides in the nuclear pore complex. It is found in the nucleus membrane. Functionally, component of the nuclear pore complex (NPC), which plays a key role in de novo assembly and insertion of NPC in the nuclear envelope. Plays a role in postmitotic nuclear pore complex assembly potentially by promoting localization of nuclear pore complex proteins to the nuclear rim. The protein is Nucleoporin ndc-1 of Caenorhabditis elegans.